The following is a 236-amino-acid chain: uncharacterized protein (236 aa).

Residues Gly217 to His236 form a disordered region. A compositionally biased stretch (gly residues) spans Gly226 to His236.

This is an uncharacterized protein from Ostreid herpesvirus 1 (isolate France) (OsHV-1).